Reading from the N-terminus, the 421-residue chain is ATP-dependent RNA helicase eIF4A (421 aa).

Positions Met-1–Gly-26 are disordered. A compositionally biased stretch (polar residues) spans Asp-13 to Gly-26. The Q motif motif lies at Asp-48 to Gln-76. The Helicase ATP-binding domain occupies Ile-79–Ile-249. Ala-92–Thr-99 lines the ATP pocket. The short motif at Asp-197–Asp-200 is the DEAD box element. The region spanning Gly-260–Ile-421 is the Helicase C-terminal domain.

This sequence belongs to the DEAD box helicase family. eIF4A subfamily. As to quaternary structure, component of the eIF4F complex, which composition varies with external and internal environmental conditions. It is composed of at least eIF4A, eIF4E and eIF4G.

The protein resides in the cytoplasm. The catalysed reaction is ATP + H2O = ADP + phosphate + H(+). ATP-dependent RNA helicase which is a subunit of the eIF4F complex involved in cap recognition and is required for mRNA binding to ribosome. In the current model of translation initiation, eIF4A unwinds RNA secondary structures in the 5'-UTR of mRNAs which is necessary to allow efficient binding of the small ribosomal subunit, and subsequent scanning for the initiator codon. The protein is ATP-dependent RNA helicase eIF4A (tif1) of Aspergillus oryzae (strain ATCC 42149 / RIB 40) (Yellow koji mold).